A 79-amino-acid polypeptide reads, in one-letter code: Methionine-rich peptide X (79 aa).

The N-terminal stretch at 1–22 (MKKLAAVMLTSCLMVAVGASFA) is a signal peptide. The interval 37–79 (KKDDMAKDEMKKDSMAKDGMKKDAMKKDAMMKKDGMTKDEMKK) is disordered.

In terms of processing, protein is oxidized (possibly on Met residues) when cells are exposed to chlorite or hypochlorite; initially the protein is highly oxidized, by 50 minutes all protein is in the reduced form.

The protein resides in the periplasm. In terms of biological role, serves as an oxidative stress sink, specifically for chlorite and hypochlorite. In Azospira oryzae (strain ATCC BAA-33 / DSM 13638 / PS) (Dechlorosoma suillum), this protein is Methionine-rich peptide X.